A 448-amino-acid chain; its full sequence is Tubulin beta chain (448 aa).

Residues Q11, E69, S138, G142, T143, G144, N204, and N226 each coordinate GTP. A Mg(2+)-binding site is contributed by E69.

The protein belongs to the tubulin family. Dimer of alpha and beta chains. A typical microtubule is a hollow water-filled tube with an outer diameter of 25 nm and an inner diameter of 15 nM. Alpha-beta heterodimers associate head-to-tail to form protofilaments running lengthwise along the microtubule wall with the beta-tubulin subunit facing the microtubule plus end conferring a structural polarity. Microtubules usually have 13 protofilaments but different protofilament numbers can be found in some organisms and specialized cells. Mg(2+) is required as a cofactor.

Its subcellular location is the cytoplasm. It is found in the cytoskeleton. Its function is as follows. Tubulin is the major constituent of microtubules, a cylinder consisting of laterally associated linear protofilaments composed of alpha- and beta-tubulin heterodimers. Microtubules grow by the addition of GTP-tubulin dimers to the microtubule end, where a stabilizing cap forms. Below the cap, tubulin dimers are in GDP-bound state, owing to GTPase activity of alpha-tubulin. This Melampsora lini (Rust fungus) protein is Tubulin beta chain (TUB1).